We begin with the raw amino-acid sequence, 361 residues long: PTI1-like tyrosine-protein kinase 1 (361 aa).

Positions 16 to 43 are disordered; it reads EEQQLKSSQQQSDANHKNSKPAPVAKHE. The 283-residue stretch at 68–350 folds into the Protein kinase domain; that stretch reads FGSKALIGEG…IVVKALQPLL (283 aa). ATP is bound by residues 74–82 and lysine 96; that span reads IGEGSYGRV. Aspartate 200 functions as the Proton acceptor in the catalytic mechanism.

It belongs to the protein kinase superfamily. Tyr protein kinase family. As to quaternary structure, interacts with OXI1. Post-translationally, autophosphorylated and phosphorylated by OXI1.

Its subcellular location is the cell membrane. The catalysed reaction is L-tyrosyl-[protein] + ATP = O-phospho-L-tyrosyl-[protein] + ADP + H(+). The sequence is that of PTI1-like tyrosine-protein kinase 1 (PTI11) from Arabidopsis thaliana (Mouse-ear cress).